An 884-amino-acid polypeptide reads, in one-letter code: E3 SUMO-protein ligase SIZ1 (884 aa).

The 35-residue stretch at 11–45 (LSYFRIKELKDVLTQLGLSKQGKKQELVDRILTLL) folds into the SAP domain. The tract at residues 84-103 (LASKGQVSSDTSNLKVKGEP) is disordered. Residues 88-97 (GQVSSDTSNL) show a composition bias toward polar residues. Lys100 is covalently cross-linked (Glycyl lysine isopeptide (Lys-Gly) (interchain with G-Cter in SUMO)). The PHD-type zinc-finger motif lies at 112 to 168 (KVRCVCGNSLETDSMIQCEDPRCHVWQHVGCVILPDKPMDGNPPLPESFYCEICRLT). Residues 346–429 (SDSDIEVVAD…FNRITSKMKH (84 aa)) form an SP-RING-type zinc finger. Zn(2+) contacts are provided by Cys379, His381, Cys402, and Cys405. A Glycyl lysine isopeptide (Lys-Gly) (interchain with G-Cter in SUMO) cross-link involves residue Lys488. Disordered stretches follow at residues 753–778 (PSLQIFLPTKPDASAQSGFKNQADMS), 792–824 (GDSASGNHGDPATTNGINSSHQMSTREGSMDTT), and 836–869 (DSRQDKAKKQRSDNPFSFPRQKRSNNEQDHQTRH). 2 stretches are compositionally biased toward polar residues: residues 766-778 (SAQSGFKNQADMS) and 803-824 (ATTNGINSSHQMSTREGSMDTT). The segment covering 837-847 (SRQDKAKKQRS) has biased composition (basic and acidic residues).

It belongs to the PIAS family. In terms of assembly, interacts (via PHD domain) with SCE1, GTE3 and GTE5. Autosumoylated at Lys-100 and Lys-488. In terms of tissue distribution, ubiquitous.

It is found in the nucleus speckle. Its pathway is protein modification; protein sumoylation. E3 SUMO protein ligase involved in regulation processes. Mediates SUMO/ attachment to PHR1, a MYB transcriptional activator controlling the phosphate deficiency responses. Functions as an upstream negative regulator of salicylic acid (SA) accumulation and subsequent SA-mediated systemic acquired resistance (SAR) signaling. Probably not involved in jasmonic acid (JA)-mediated defense response. Participates in abiotic stress-induced sumoylation. Controls heat shock-induced SUMO1 and SUMO2 conjugation and facilitates basal thermotolerance. Involved in freezing tolerance by mediating sumoylation of ICE1, a transcription activator of the cold signaling regulator CBF3/DREB1A. Acts as a positive regulator of drought stress tolerance. Acts as a floral repressor that promotes FLC expression by repressing FLD activity through sumoylation. Acts as a negative regulator of abscisic acid (ABA) signaling through ABI5 sumoylation. Mediates sumoylation of SCE1, GTE3 and GTE5. Functions as a negative regulator of SnRK1 signaling through sumoylation of several components of the SnRK1 complex. This chain is E3 SUMO-protein ligase SIZ1, found in Arabidopsis thaliana (Mouse-ear cress).